The chain runs to 59 residues: Large ribosomal subunit protein uL30 (59 aa).

It belongs to the universal ribosomal protein uL30 family. In terms of assembly, part of the 50S ribosomal subunit.

The sequence is that of Large ribosomal subunit protein uL30 from Lactococcus lactis subsp. lactis (strain IL1403) (Streptococcus lactis).